The following is a 31-amino-acid chain: Photosystem I reaction center subunit XII (31 aa).

The helical transmembrane segment at 7–26 (QVYVALVIALLPAVLAFRLS) threads the bilayer.

Belongs to the PsaM family.

It localises to the cellular thylakoid membrane. This is Photosystem I reaction center subunit XII from Thermosynechococcus vestitus (strain NIES-2133 / IAM M-273 / BP-1).